A 717-amino-acid polypeptide reads, in one-letter code: Ribosomal RNA large subunit methyltransferase K/L (717 aa).

In terms of domain architecture, THUMP spans 45–142; the sequence is GAYRICLGSR…DKRSGVQTVQ (98 aa).

Belongs to the methyltransferase superfamily. RlmKL family.

Its subcellular location is the cytoplasm. The catalysed reaction is guanosine(2445) in 23S rRNA + S-adenosyl-L-methionine = N(2)-methylguanosine(2445) in 23S rRNA + S-adenosyl-L-homocysteine + H(+). It catalyses the reaction guanosine(2069) in 23S rRNA + S-adenosyl-L-methionine = N(2)-methylguanosine(2069) in 23S rRNA + S-adenosyl-L-homocysteine + H(+). Its function is as follows. Specifically methylates the guanine in position 2445 (m2G2445) and the guanine in position 2069 (m7G2069) of 23S rRNA. The protein is Ribosomal RNA large subunit methyltransferase K/L of Hahella chejuensis (strain KCTC 2396).